The chain runs to 438 residues: Proline--tRNA ligase (438 aa).

It belongs to the class-II aminoacyl-tRNA synthetase family. ProS type 2 subfamily. As to quaternary structure, homodimer.

It localises to the cytoplasm. The catalysed reaction is tRNA(Pro) + L-proline + ATP = L-prolyl-tRNA(Pro) + AMP + diphosphate. Functionally, catalyzes the attachment of proline to tRNA(Pro) in a two-step reaction: proline is first activated by ATP to form Pro-AMP and then transferred to the acceptor end of tRNA(Pro). The polypeptide is Proline--tRNA ligase (Gluconobacter oxydans (strain 621H) (Gluconobacter suboxydans)).